The primary structure comprises 330 residues: Probable cell division protein WhiA (330 aa).

The segment at residues 275 to 308 (SLDELGRLSDPPLTKDAIAGRIRRLLAMADRRAE) is a DNA-binding region (H-T-H motif).

The protein belongs to the WhiA family.

Its function is as follows. Involved in cell division and chromosome segregation. This chain is Probable cell division protein WhiA, found in Kocuria rhizophila (strain ATCC 9341 / DSM 348 / NBRC 103217 / DC2201).